The sequence spans 472 residues: Probable endopolygalacturonase D (472 aa).

Residues 1-16 (MKRGALLVPFVPLALA) form the signal peptide. N24 is a glycosylation site (N-linked (GlcNAc...) asparagine). C129 and C144 are oxidised to a cystine. PbH1 repeat units follow at residues 236–258 (MYYS…DIEH), 259–297 (TENL…DIKS), and 298–319 (STNL…AVSS). An N-linked (GlcNAc...) asparagine glycan is attached at N300. D312 acts as the Proton donor in catalysis. Residues C314 and C330 are joined by a disulfide bond. The active site involves H334. 4 PbH1 repeats span residues 349-370 (VDGV…RIKS), 378-400 (VSNI…DIQQ), 412-433 (TNGV…SDGK), and 444-467 (CSNF…YPTD). N-linked (GlcNAc...) asparagine glycans are attached at residues N361, N385, and N419. Intrachain disulfides connect C439–C444 and C462–C469.

It belongs to the glycosyl hydrolase 28 family.

It localises to the secreted. It carries out the reaction (1,4-alpha-D-galacturonosyl)n+m + H2O = (1,4-alpha-D-galacturonosyl)n + (1,4-alpha-D-galacturonosyl)m.. Involved in maceration and soft-rotting of plant tissue. Hydrolyzes the 1,4-alpha glycosidic bonds of de-esterified pectate in the smooth region of the plant cell wall. The protein is Probable endopolygalacturonase D (pgaD) of Neosartorya fischeri (strain ATCC 1020 / DSM 3700 / CBS 544.65 / FGSC A1164 / JCM 1740 / NRRL 181 / WB 181) (Aspergillus fischerianus).